The primary structure comprises 410 residues: S-adenosylmethionine synthase (410 aa).

ATP is bound at residue H15. A Mg(2+)-binding site is contributed by D17. Residue E43 coordinates K(+). E56 and Q100 together coordinate L-methionine. The tract at residues 100 to 110 (QSPDIAKGVDT) is flexible loop. Residues 171–173 (DGK), 248–249 (KF), D257, 263–264 (RK), A280, and K284 each bind ATP. Residue D257 coordinates L-methionine. Position 288 (K288) interacts with L-methionine.

Belongs to the AdoMet synthase family. Homotetramer; dimer of dimers. It depends on Mg(2+) as a cofactor. The cofactor is K(+).

It localises to the cytoplasm. The enzyme catalyses L-methionine + ATP + H2O = S-adenosyl-L-methionine + phosphate + diphosphate. Its pathway is amino-acid biosynthesis; S-adenosyl-L-methionine biosynthesis; S-adenosyl-L-methionine from L-methionine: step 1/1. Catalyzes the formation of S-adenosylmethionine (AdoMet) from methionine and ATP. The overall synthetic reaction is composed of two sequential steps, AdoMet formation and the subsequent tripolyphosphate hydrolysis which occurs prior to release of AdoMet from the enzyme. This chain is S-adenosylmethionine synthase, found in Prochlorococcus marinus (strain MIT 9211).